The primary structure comprises 408 residues: GPI transamidase component GAB1 homolog (408 aa).

The next 10 membrane-spanning stretches (helical) occupy residues 9–29 (LLGL…TWIA), 66–86 (VFYQ…LGGI), 88–108 (VTRF…YLIA), 125–145 (PLWI…GIAC), 149–169 (MILN…SYAI), 207–227 (IFVV…FFLN), 266–286 (FFLF…SIRL), 303–323 (LFKA…LPIF), 339–359 (AIVF…TLGC), and 370–390 (LILA…LLLV). Residues 247–267 (PNLGLWWYFFTEMFNEFRTFF) are may be involved in recognition of long-chain fatty acids in GPI.

It belongs to the PIGU family. In terms of assembly, forms a complex with PIG-S homolog, PIG-T homolog and GPI8.

The protein localises to the endoplasmic reticulum membrane. It functions in the pathway glycolipid biosynthesis; glycosylphosphatidylinositol-anchor biosynthesis. Component of the GPI transamidase complex. May be involved in the recognition of either the GPI attachment signal or the lipid portion of GPI. The sequence is that of GPI transamidase component GAB1 homolog from Schizosaccharomyces pombe (strain 972 / ATCC 24843) (Fission yeast).